Consider the following 305-residue polypeptide: MAFAMSSSLTLFQYQSFGKKPFFSRRRDFAGCSMMNPLVARCNRATEICCVVRKDGEAESLVEAENDQLEEEVMKPTSIDSFSVVLRSERKKAERRTYLVAAMASSLGFTFMAAAAVYYRFAWQMEGGAVPLTEMMGTFSLAVGSAVGMEYWARWAHRALWHTSLWHMHESHHRPRDGPFELNDVFALINAFPAVALLAFGFFHRGFFSGLCFGAGLGITLYGMAYMFVHDGLVHRRFPVGPIATVPYFQWVAAAHQIHHADKFNGVPYGLFLGHKELEEVGGMEALEREIKRGVKVFSSSPNQS.

The transit peptide at 1–41 directs the protein to the chloroplast; sequence MAFAMSSSLTLFQYQSFGKKPFFSRRRDFAGCSMMNPLVAR. A run of 2 helical transmembrane segments spans residues 98–118 and 129–149; these read YLVAAMASSLGFTFMAAAAVY and AVPLTEMMGTFSLAVGSAVGM. The 127-residue stretch at 146–272 folds into the Fatty acid hydroxylase domain; that stretch reads AVGMEYWARW…KFNGVPYGLF (127 aa). The Histidine box-1 signature appears at 157–162; it reads HRALWH. The Histidine box-2 motif lies at 169–173; sequence HESHH. 2 consecutive transmembrane segments (helical) span residues 184–204 and 207–227; these read DVFALINAFPAVALLAFGFFH and FFSGLCFGAGLGITLYGMAYM. The Histidine box-3 motif lies at 230–235; it reads HDGLVH. A Histidine box-4 motif is present at residues 256 to 260; the sequence is HQIHH.

Belongs to the sterol desaturase family. Homodimer. In terms of tissue distribution, expressed in flower buds and lips. Detected in roots and leaves.

Its subcellular location is the plastid. The protein localises to the chloroplast membrane. The catalysed reaction is all-trans-beta-carotene + 4 reduced [2Fe-2S]-[ferredoxin] + 2 O2 + 4 H(+) = all-trans-zeaxanthin + 4 oxidized [2Fe-2S]-[ferredoxin] + 2 H2O. Nonheme diiron monooxygenase involved in the biosynthesis of xanthophylls. Specific for beta-ring hydroxylations of beta-carotene. Uses ferredoxin as an electron donor. This is Beta-carotene 3-hydroxylase, chloroplastic (BHY) from Oncidium hybrid cultivar (Orchid).